A 333-amino-acid polypeptide reads, in one-letter code: Adenosine deaminase (333 aa).

Residues His-12 and His-14 each contribute to the Zn(2+) site. Residues His-14, Asp-16, and Gly-170 each coordinate substrate. His-197 serves as a coordination point for Zn(2+). Residue Glu-200 is the Proton donor of the active site. Residue Asp-278 coordinates Zn(2+). Substrate is bound at residue Asp-279.

Belongs to the metallo-dependent hydrolases superfamily. Adenosine and AMP deaminases family. Adenosine deaminase subfamily. The cofactor is Zn(2+).

The catalysed reaction is adenosine + H2O + H(+) = inosine + NH4(+). It carries out the reaction 2'-deoxyadenosine + H2O + H(+) = 2'-deoxyinosine + NH4(+). Functionally, catalyzes the hydrolytic deamination of adenosine and 2-deoxyadenosine. This Escherichia coli O139:H28 (strain E24377A / ETEC) protein is Adenosine deaminase.